The primary structure comprises 155 residues: Anaerobic ribonucleoside-triphosphate reductase-activating protein (155 aa).

Positions 26, 30, and 33 each coordinate [4Fe-4S] cluster. S-adenosyl-L-methionine contacts are provided by residues 32–34 (GCY) and Gly74.

Belongs to the organic radical-activating enzymes family. In terms of assembly, forms a tetramer composed of two NrdD and two NrdG subunits. Requires [4Fe-4S] cluster as cofactor.

The protein resides in the cytoplasm. It carries out the reaction glycyl-[protein] + reduced [flavodoxin] + S-adenosyl-L-methionine = glycin-2-yl radical-[protein] + semiquinone [flavodoxin] + 5'-deoxyadenosine + L-methionine + H(+). Its function is as follows. Activation of anaerobic ribonucleoside-triphosphate reductase under anaerobic conditions by generation of an organic free radical, using S-adenosylmethionine and reduced flavodoxin as cosubstrates to produce 5'-deoxy-adenosine. The polypeptide is Anaerobic ribonucleoside-triphosphate reductase-activating protein (nrdG) (Haemophilus influenzae (strain ATCC 51907 / DSM 11121 / KW20 / Rd)).